The following is a 107-amino-acid chain: Latency-related protein 2 (107 aa).

The span at 1–44 (MAPPLPRTPTPTHPHSHAPPLPRTPTPAHPHSHAPPLPRTPTPT) shows a compositional bias: pro residues. A disordered region spans residues 1 to 63 (MAPPLPRTPT…SIQHRQGKDT (63 aa)). Repeat copies occupy residues 2 to 17 (APPL…PHSH), 18 to 33 (APPL…PHSH), and 34 to 49 (APPL…PHSH). Positions 2-49 (APPLPRTPTPTHPHSHAPPLPRTPTPAHPHSHAPPLPRTPTPTHPHSH) are 3 X 17 AA tandem repeats. The span at 46–58 (PHSHAPPRSIQHR) shows a compositional bias: basic residues.

The polypeptide is Latency-related protein 2 (Homo sapiens (Human)).